The chain runs to 249 residues: 5'-nucleotidase SurE (249 aa).

Residues aspartate 8, aspartate 9, serine 39, and asparagine 91 each contribute to the a divalent metal cation site.

Belongs to the SurE nucleotidase family. It depends on a divalent metal cation as a cofactor.

Its subcellular location is the cytoplasm. The catalysed reaction is a ribonucleoside 5'-phosphate + H2O = a ribonucleoside + phosphate. Nucleotidase that shows phosphatase activity on nucleoside 5'-monophosphates. The sequence is that of 5'-nucleotidase SurE from Pseudomonas savastanoi pv. phaseolicola (strain 1448A / Race 6) (Pseudomonas syringae pv. phaseolicola (strain 1448A / Race 6)).